Consider the following 343-residue polypeptide: Type II restriction enzyme BsuMI component YdiS (343 aa).

BsuMI restriction activity requires YdiR, YdiS and YdjA.

The catalysed reaction is Endonucleolytic cleavage of DNA to give specific double-stranded fragments with terminal 5'-phosphates.. Functionally, a P subtype restriction enzyme that recognizes the double-stranded sequence 5'-CTCGAG-3'; the cleavage site is unknown. The polypeptide is Type II restriction enzyme BsuMI component YdiS (ydiS) (Bacillus subtilis (strain 168)).